A 204-amino-acid chain; its full sequence is Large ribosomal subunit protein bL17 (204 aa).

Residues 124 to 204 (QAVGEAERAR…DDDGPAESKS (81 aa)) form a disordered region. A compositionally biased stretch (basic and acidic residues) spans 128–142 (EAERARGTRFSERRK). Residues 156–191 (SESPTAAAVAAQSAEEQAPVEETLTAQAAETSAATV) are compositionally biased toward low complexity. Over residues 192–204 (EETDDDGPAESKS) the composition is skewed to acidic residues.

Belongs to the bacterial ribosomal protein bL17 family. Part of the 50S ribosomal subunit. Contacts protein L32.

This is Large ribosomal subunit protein bL17 from Frankia alni (strain DSM 45986 / CECT 9034 / ACN14a).